A 411-amino-acid chain; its full sequence is Ubiquitin-binding protein CUE5 (411 aa).

The segment covering 1 to 12 has biased composition (basic and acidic residues); it reads MEEKEGIKDSSL. 2 disordered regions span residues 1 to 102 and 142 to 411; these read MEEK…NPIL and ESGK…DDEM. Lys15 participates in a covalent cross-link: Glycyl lysine isopeptide (Lys-Gly) (interchain with G-Cter in ubiquitin). Phosphoserine occurs at positions 21 and 36. A compositionally biased stretch (basic and acidic residues) spans 25–58; it reads DISKTTDVDLNSDGKKDNDTSAKDGTPKVEEKVN. Lys59 is covalently cross-linked (Glycyl lysine isopeptide (Lys-Gly) (interchain with G-Cter in ubiquitin)). Residue Thr70 is modified to Phosphothreonine. A Glycyl lysine isopeptide (Lys-Gly) (interchain with G-Cter in ubiquitin) cross-link involves residue Lys76. At Ser91 the chain carries Phosphoserine. A CUE domain is found at 97–140; the sequence is KENPILQELKDAFPNLEEKYIKAVIIASQGVLSPAFNALLFLSD. Lys156 participates in a covalent cross-link: Glycyl lysine isopeptide (Lys-Gly) (interchain with G-Cter in ubiquitin). Thr167 is subject to Phosphothreonine. Positions 209–219 are enriched in basic and acidic residues; sequence NPNEREQHHED. Ser220 bears the Phosphoserine mark. The span at 230–242 shows a compositional bias: basic and acidic residues; sequence VEKDLPELTDRAG. Residues 245–256 show a composition bias toward polar residues; sequence LQDTANKVSNWI. Ser309 and Ser318 each carry phosphoserine. Thr346 bears the Phosphothreonine mark. Ser348 is subject to Phosphoserine. Phosphothreonine is present on Thr352. A Glycyl lysine isopeptide (Lys-Gly) (interchain with G-Cter in ubiquitin) cross-link involves residue Lys354. Residues Thr364 and Thr367 each carry the phosphothreonine modification. The AIM signature appears at 373–376; sequence WQPL. Lys396 participates in a covalent cross-link: Glycyl lysine isopeptide (Lys-Gly) (interchain with G-Cter in ubiquitin). Residues 399–411 show a composition bias toward acidic residues; it reads DEDEFLINSDDEM. A Phosphoserine modification is found at Ser407.

Interacts with ATG8 (via AIM motif), CLB2, and ubiquitin (via CUE domain).

It localises to the cytoplasm. Connects the ubiquitin pathway to autophagy by functioning as a ubiquitin-ATG8 adapter and thus mediating autophagic clearance of ubiquitin conjugates under starvation conditions. The CUE5-dependent selective autophagy pathway plays an important role in clearance of cytotoxic protein aggregates. Not required for cytoplasmic to vacuole pathway (cvt), mitophagy, pexophagy, or ribophagy. This is Ubiquitin-binding protein CUE5 from Saccharomyces cerevisiae (strain ATCC 204508 / S288c) (Baker's yeast).